Here is a 279-residue protein sequence, read N- to C-terminus: Lyso-glycine lipid O-acyltransferase (279 aa).

It belongs to the O-acyltransferase GlsA family.

It carries out the reaction a lyso-glycine lipid + a fatty acyl-[ACP] = a glycine lipid + holo-[ACP]. The enzyme catalyses N-[(3R)-3-hydroxyhexadecanoyl]-glycine + hexadecanoyl-[ACP] = N-[(3R)-3-(hexadecanoyloxy)hexadecanoyl]-glycine + holo-[ACP]. The protein operates within lipid metabolism. Is involved in the production of glycine lipids (GL), which are phosphorus-free membrane lipids. Catalyzes the second step of GL biosynthesis, i.e. the O-acylation of the hydroxyl group of lyso-glycine lipids, resulting in the production of the mature diacylated glycine lipids. This chain is Lyso-glycine lipid O-acyltransferase, found in Phocaeicola vulgatus (strain ATCC 8482 / DSM 1447 / JCM 5826 / CCUG 4940 / NBRC 14291 / NCTC 11154) (Bacteroides vulgatus).